A 96-amino-acid polypeptide reads, in one-letter code: Probable Fe(2+)-trafficking protein (96 aa).

Positions 21–40 are disordered; sequence LPKMPHPPFPNKKGQELQET.

This sequence belongs to the Fe(2+)-trafficking protein family.

Its function is as follows. Could be a mediator in iron transactions between iron acquisition and iron-requiring processes, such as synthesis and/or repair of Fe-S clusters in biosynthetic enzymes. The polypeptide is Probable Fe(2+)-trafficking protein (Psychrobacter arcticus (strain DSM 17307 / VKM B-2377 / 273-4)).